The sequence spans 362 residues: Carbamoyl phosphate synthase small chain (362 aa).

The interval 1–169 (MGKRLLILED…TKTAYPAPGV (169 aa)) is CPSase. L-glutamine contacts are provided by Ser-46, Gly-220, and Gly-222. One can recognise a Glutamine amidotransferase type-1 domain in the interval 172–358 (NIVLVDFGLK…LELIDAFQLE (187 aa)). Catalysis depends on Cys-247, which acts as the Nucleophile. Positions 248, 251, 289, 291, and 292 each coordinate L-glutamine. Active-site residues include His-331 and Asp-333.

Belongs to the CarA family. Composed of two chains; the small (or glutamine) chain promotes the hydrolysis of glutamine to ammonia, which is used by the large (or ammonia) chain to synthesize carbamoyl phosphate. Tetramer of heterodimers (alpha,beta)4.

The enzyme catalyses hydrogencarbonate + L-glutamine + 2 ATP + H2O = carbamoyl phosphate + L-glutamate + 2 ADP + phosphate + 2 H(+). It carries out the reaction L-glutamine + H2O = L-glutamate + NH4(+). It functions in the pathway amino-acid biosynthesis; L-arginine biosynthesis; carbamoyl phosphate from bicarbonate: step 1/1. Its pathway is pyrimidine metabolism; UMP biosynthesis via de novo pathway; (S)-dihydroorotate from bicarbonate: step 1/3. In terms of biological role, small subunit of the glutamine-dependent carbamoyl phosphate synthetase (CPSase). CPSase catalyzes the formation of carbamoyl phosphate from the ammonia moiety of glutamine, carbonate, and phosphate donated by ATP, constituting the first step of 2 biosynthetic pathways, one leading to arginine and/or urea and the other to pyrimidine nucleotides. The small subunit (glutamine amidotransferase) binds and cleaves glutamine to supply the large subunit with the substrate ammonia. This chain is Carbamoyl phosphate synthase small chain, found in Streptococcus mutans serotype c (strain ATCC 700610 / UA159).